The sequence spans 256 residues: Isoprenyl transferase (256 aa).

The active site involves Asp33. Residue Asp33 participates in Mg(2+) binding. Substrate contacts are provided by residues 34 to 37, Trp38, Arg46, His50, and 78 to 80; these read GNGR and STE. The Proton acceptor role is filled by Asn81. Substrate is bound by residues Trp82, Arg84, Arg201, and 207–209; that span reads RIS. Glu220 provides a ligand contact to Mg(2+).

It belongs to the UPP synthase family. As to quaternary structure, homodimer. Mg(2+) serves as cofactor.

Catalyzes the condensation of isopentenyl diphosphate (IPP) with allylic pyrophosphates generating different type of terpenoids. This is Isoprenyl transferase from Staphylococcus aureus (strain COL).